The primary structure comprises 99 residues: Large ribosomal subunit protein uL23 (99 aa).

It belongs to the universal ribosomal protein uL23 family. Part of the 50S ribosomal subunit. Contacts protein L29, and trigger factor when it is bound to the ribosome.

Its function is as follows. One of the early assembly proteins it binds 23S rRNA. One of the proteins that surrounds the polypeptide exit tunnel on the outside of the ribosome. Forms the main docking site for trigger factor binding to the ribosome. This is Large ribosomal subunit protein uL23 from Stutzerimonas stutzeri (strain A1501) (Pseudomonas stutzeri).